Here is an 81-residue protein sequence, read N- to C-terminus: Exodeoxyribonuclease 7 small subunit (81 aa).

The protein belongs to the XseB family. Heterooligomer composed of large and small subunits.

It is found in the cytoplasm. It carries out the reaction Exonucleolytic cleavage in either 5'- to 3'- or 3'- to 5'-direction to yield nucleoside 5'-phosphates.. In terms of biological role, bidirectionally degrades single-stranded DNA into large acid-insoluble oligonucleotides, which are then degraded further into small acid-soluble oligonucleotides. In Pseudomonas syringae pv. syringae (strain B728a), this protein is Exodeoxyribonuclease 7 small subunit.